The primary structure comprises 208 residues: FMN-dependent NADH:quinone oxidoreductase (208 aa).

FMN contacts are provided by residues S9, 15 to 17 (SAS), 96 to 99 (MYNF), and 140 to 143 (TRGG).

This sequence belongs to the azoreductase type 1 family. As to quaternary structure, homodimer. The cofactor is FMN.

It carries out the reaction 2 a quinone + NADH + H(+) = 2 a 1,4-benzosemiquinone + NAD(+). The catalysed reaction is N,N-dimethyl-1,4-phenylenediamine + anthranilate + 2 NAD(+) = 2-(4-dimethylaminophenyl)diazenylbenzoate + 2 NADH + 2 H(+). Its function is as follows. Quinone reductase that provides resistance to thiol-specific stress caused by electrophilic quinones. Functionally, also exhibits azoreductase activity. Catalyzes the reductive cleavage of the azo bond in aromatic azo compounds to the corresponding amines. The polypeptide is FMN-dependent NADH:quinone oxidoreductase (Ralstonia nicotianae (strain ATCC BAA-1114 / GMI1000) (Ralstonia solanacearum)).